Reading from the N-terminus, the 1098-residue chain is Mediator of RNA polymerase II transcription subunit 5 (1098 aa).

The interval 1019–1041 (PDDVQKSADMKPDTGIKEDDSEK) is disordered. The span at 1021–1041 (DVQKSADMKPDTGIKEDDSEK) shows a compositional bias: basic and acidic residues.

Belongs to the Mediator complex subunit 5 family. In terms of assembly, component of the Mediator complex.

The protein localises to the nucleus. In terms of biological role, component of the Mediator complex, a coactivator involved in the regulated transcription of nearly all RNA polymerase II-dependent genes. Mediator functions as a bridge to convey information from gene-specific regulatory proteins to the basal RNA polymerase II transcription machinery. Mediator is recruited to promoters by direct interactions with regulatory proteins and serves as a scaffold for the assembly of a functional preinitiation complex with RNA polymerase II and the general transcription factors. The protein is Mediator of RNA polymerase II transcription subunit 5 (NUT1) of Eremothecium gossypii (strain ATCC 10895 / CBS 109.51 / FGSC 9923 / NRRL Y-1056) (Yeast).